The following is a 562-amino-acid chain: NAD-dependent malic enzyme (562 aa).

Y101 acts as the Proton donor in catalysis. NAD(+) is bound at residue R154. K172 (proton acceptor) is an active-site residue. Residues E243, D244, and D267 each contribute to the a divalent metal cation site. Positions 267 and 415 each coordinate NAD(+).

Belongs to the malic enzymes family. As to quaternary structure, homotetramer. Requires Mg(2+) as cofactor. The cofactor is Mn(2+).

It catalyses the reaction (S)-malate + NAD(+) = pyruvate + CO2 + NADH. It carries out the reaction oxaloacetate + H(+) = pyruvate + CO2. In Shewanella piezotolerans (strain WP3 / JCM 13877), this protein is NAD-dependent malic enzyme.